The following is a 409-amino-acid chain: TNF receptor-associated factor family protein DDB_G0273435/DDB_G0273505 (409 aa).

The RING-type; degenerate zinc finger occupies 20–59 (CQLCCNLMNESVSCPNGHCLCKGCFHKQIETVKSECPICC). 2 TRAF-type zinc fingers span residues 75-145 (KHIN…EIEN) and 145-201 (NHQD…HELS). The stretch at 221–250 (HQSLLKSTSKQLKQLRSSCEELETKLINND) forms a coiled coil. Residues 252-380 (SFNGRWIIKQ…NDQLIIKFNI (129 aa)) enclose the MATH domain.

Belongs to the TNF receptor-associated factor family. A subfamily.

It is found in the cytoplasm. Functionally, probable adapter protein and signal transducer that links members of the tumor necrosis factor receptor family to different signaling pathways by association with the receptor cytoplasmic domain and kinases. The chain is TNF receptor-associated factor family protein DDB_G0273435/DDB_G0273505 from Dictyostelium discoideum (Social amoeba).